The primary structure comprises 195 residues: Interferon tau (195 aa).

Positions 1-23 are cleaved as a signal peptide; it reads MAFVLSLLMALVLASYSPGGSLG. 2 disulfides stabilise this stretch: C24/C122 and C52/C162.

This sequence belongs to the alpha/beta interferon family. IFN-alphaII subfamily. Constitutively and exclusively expressed in the mononuclear cells of the extraembryonic trophectoderm.

The protein localises to the secreted. Functionally, paracrine hormone primarily responsible for maternal recognition of pregnancy. Interacts with endometrial receptors, probably type I interferon receptors, and blocks estrogen receptor expression, preventing the estrogen-induced increase in oxytocin receptor expression in the endometrium. This results in the suppression of the pulsatile endometrial release of the luteolytic hormone prostaglandin F2-alpha, hindering the regression of the corpus luteum (luteolysis) and therefore a return to ovarian cyclicity. This, and a possible direct effect of IFN-tau on prostaglandin synthesis, leads in turn to continued ovarian progesterone secretion, which stimulates the secretion by the endometrium of the nutrients required for the growth of the conceptus. In summary, displays particularly high antiviral and antiproliferative potency concurrently with particular weak cytotoxicity, high antiluteolytic activity and immunomodulatory properties. In contrast with other IFNs, IFN-tau is not virally inducible. The chain is Interferon tau (IFNT) from Cervus elaphus (Red deer).